We begin with the raw amino-acid sequence, 291 residues long: Bis(5'-nucleosyl)-tetraphosphatase, symmetrical (291 aa).

The protein belongs to the Ap4A hydrolase family.

It carries out the reaction P(1),P(4)-bis(5'-adenosyl) tetraphosphate + H2O = 2 ADP + 2 H(+). Functionally, hydrolyzes diadenosine 5',5'''-P1,P4-tetraphosphate to yield ADP. In Coxiella burnetii (strain CbuG_Q212) (Coxiella burnetii (strain Q212)), this protein is Bis(5'-nucleosyl)-tetraphosphatase, symmetrical.